A 75-amino-acid polypeptide reads, in one-letter code: ORF2p protein (75 aa).

Residues 13 to 18 (WIGHPV) form an important for viral replication in intestinal cells region. A transmembrane helix spans residues 23-45 (IVYLFVGFTPLTLETLHTLNYII). The disordered stretch occupies residues 53–75 (APRSPHSDPARMRIPTQPRKAPL).

The protein resides in the host cytoplasmic vesicle membrane. Functionally, facilitates virus release from intestinal cells in vitro, possibly through the host autophagic pathway. The polypeptide is ORF2p protein (Human enterovirus 71 (strain USA/BrCr/1970) (EV71)).